Reading from the N-terminus, the 133-residue chain is Pheromone-regulated membrane protein 3 (133 aa).

The Nuclear segment spans residues 1 to 104 (MTAMKEDNAA…SKVQRENKGS (104 aa)). The segment at 36–100 (ADGFVINKAK…DASESKVQRE (65 aa)) is disordered. Residues 69-75 (GRVRKHK) carry the Bipartite nuclear localization signal motif. Basic and acidic residues predominate over residues 90–100 (KDASESKVQRE). Residues 105–127 (FYQGAIFGSFLGAAVTTVLSNLA) traverse the membrane as a helical segment. Residues 128–133 (VKALQN) are Perinuclear space-facing.

As to quaternary structure, interacts with KAR5.

It localises to the nucleus outer membrane. It is found in the cytoplasm. The protein resides in the cytoskeleton. The protein localises to the microtubule organizing center. Its subcellular location is the spindle pole body. Functionally, required for the fusion of nuclear envelopes during mating, ensuring proper karyogamy. Plays a role in the initiation of outer nuclear envelope fusion. The sequence is that of Pheromone-regulated membrane protein 3 (PRM3) from Saccharomyces cerevisiae (strain ATCC 204508 / S288c) (Baker's yeast).